We begin with the raw amino-acid sequence, 358 residues long: Peptide chain release factor 1 (358 aa).

The residue at position 235 (Q235) is an N5-methylglutamine. The segment at 284 to 309 is disordered; the sequence is KVESERSASRKSQVGSGDRSERIRTY.

The protein belongs to the prokaryotic/mitochondrial release factor family. Methylated by PrmC. Methylation increases the termination efficiency of RF1.

Its subcellular location is the cytoplasm. In terms of biological role, peptide chain release factor 1 directs the termination of translation in response to the peptide chain termination codons UAG and UAA. In Bartonella tribocorum (strain CIP 105476 / IBS 506), this protein is Peptide chain release factor 1.